Consider the following 561-residue polypeptide: Potassium-transporting ATPase potassium-binding subunit (561 aa).

10 consecutive transmembrane segments (helical) span residues 4 to 24 (IIMQDVFFIVLLLVLAIPLGI), 65 to 85 (AGSVLAFSAIGFVFVMAVLML), 134 to 154 (GLTVQNFVSAATGIAVLFAVI), 177 to 197 (LYILLPLSLVLAILLVSQGVV), 253 to 273 (FTNLIEMLAILLIPVALVVMF), 285 to 305 (AIMTAMMIVFVVGIVAITISE), 380 to 400 (GLYGMIGFIILTVFIAGLLVG), 417 to 437 (MVCLLILVPPLLTLFGTAFAV), 484 to 504 (MVGALMMLFARFIPLIAALYL), and 528 to 548 (FIGLLIGVVVLVGALSFLPAL).

The protein belongs to the KdpA family. In terms of assembly, the system is composed of three essential subunits: KdpA, KdpB and KdpC.

It localises to the cell membrane. Functionally, part of the high-affinity ATP-driven potassium transport (or Kdp) system, which catalyzes the hydrolysis of ATP coupled with the electrogenic transport of potassium into the cytoplasm. This subunit binds the extracellular potassium ions and delivers the ions to the membrane domain of KdpB through an intramembrane tunnel. The polypeptide is Potassium-transporting ATPase potassium-binding subunit (Listeria welshimeri serovar 6b (strain ATCC 35897 / DSM 20650 / CCUG 15529 / CIP 8149 / NCTC 11857 / SLCC 5334 / V8)).